We begin with the raw amino-acid sequence, 192 residues long: dCTP deaminase, dUMP-forming (192 aa).

DCTP is bound by residues 101-106 (KSSLGR), Asp-119, 127-129 (TLE), Gln-148, Tyr-162, and Gln-174. Catalysis depends on Glu-129, which acts as the Proton donor/acceptor. The disordered stretch occupies residues 169–192 (SRYQGQRGPTPSRSWQSWRTWPTR). Residues 171 to 192 (YQGQRGPTPSRSWQSWRTWPTR) show a composition bias toward polar residues.

Belongs to the dCTP deaminase family. In terms of assembly, homotrimer.

It catalyses the reaction dCTP + 2 H2O = dUMP + NH4(+) + diphosphate. Its pathway is pyrimidine metabolism; dUMP biosynthesis; dUMP from dCTP: step 1/1. Bifunctional enzyme that catalyzes both the deamination of dCTP to dUTP and the hydrolysis of dUTP to dUMP without releasing the toxic dUTP intermediate. The chain is dCTP deaminase, dUMP-forming from Salinispora tropica (strain ATCC BAA-916 / DSM 44818 / JCM 13857 / NBRC 105044 / CNB-440).